Consider the following 790-residue polypeptide: Probable copper-transporting ATPase SynA (790 aa).

At 1–105 the chain is on the cytoplasmic side; that stretch reads MPAAIVHSAD…IPPLQQQRLQ (105 aa). The 68-residue stretch at 14–81 folds into the HMA domain; the sequence is TSILVEVEGM…EITGLGFRAQ (68 aa). Positions 25 and 28 each coordinate Cu(+). Residues 106-127 form a helical membrane-spanning segment; it reads LAIAAFLLIVSSWGHLGHWLDH. Over 128–136 the chain is Extracellular; sequence PLPGTDQLW. A helical transmembrane segment spans residues 137 to 156; sequence FHALLATWALLGPGRSILQA. Residues 157 to 163 lie on the Cytoplasmic side of the membrane; the sequence is GWQGLRC. A helical membrane pass occupies residues 164–184; the sequence is GAPNMNSLVLLGTGSAYLASL. Over 185–198 the chain is Extracellular; sequence VALLWPQLGWVCFF. The helical transmembrane segment at 199 to 219 threads the bilayer; it reads DEPVMLLGFILLGRTLEEQAR. Residues 220–358 are Cytoplasmic-facing; the sequence is FRSQAALQNL…KAPVQRFADA (139 aa). Residues 359–381 traverse the membrane as a helical segment; the sequence is IAGRFVYGVCAIAALTFGFWATL. Residues 382 to 420 are Extracellular-facing; that stretch reads GSRWWPQVLQQPLPGLLIHAPHHGMEMAHPHSHSPLLLA. The chain crosses the membrane as a helical span at residues 421 to 438; the sequence is LTLAISVLVVACPCALGL. Residues 439–723 are Cytoplasmic-facing; it reads ATPTAILVAT…NLSQMGLRTI (285 aa). Residue aspartate 476 is the 4-aspartylphosphate intermediate of the active site. Mg(2+) is bound by residues aspartate 669 and aspartate 673. The chain crosses the membrane as a helical span at residues 724–743; the sequence is RQNLTWALGYNVVMLPLAAG. Topologically, residues 744–755 are extracellular; sequence AFLPAYGLALTP. Residues 756–774 form a helical membrane-spanning segment; it reads AIAGACMAVSSLAVVSNSL. The Cytoplasmic segment spans residues 775 to 790; the sequence is LLRYWFRRSLNHSVSV.

Belongs to the cation transport ATPase (P-type) (TC 3.A.3) family. Type IB subfamily.

The protein localises to the cell membrane. The catalysed reaction is Cu(+)(in) + ATP + H2O = Cu(+)(out) + ADP + phosphate + H(+). In terms of biological role, involved in copper transport. This chain is Probable copper-transporting ATPase SynA (synA), found in Synechococcus elongatus (strain ATCC 33912 / PCC 7942 / FACHB-805) (Anacystis nidulans R2).